The following is a 285-amino-acid chain: MLYLIGLGLGDAKDITVKGLEVVRRCSRVYLEAYTSVLTVGKEALEEFYGRKLVVADREEVEQEADNILKDADISDVAFLVVGDPFGATTHSDLVLRATKLGIPYRVIHNASIMNAVGCCGLQLYKFGETVSIVFWTDTWRPESFFDKVKKNRQNGMHTLCLLDIKVKEQSLENLIKGRKIYEPPRYMSVNQAAQQLLEIVQNQRIRGEEPAVTEETLCVGLARVGADDQKIAAGTLRQMCTVDLGEPLHSLIITGGSIHPMEMEMLSLFSIPENSSESQSINGL.

Residues L9, D84, G87, 112–113 (SI), and L163 contribute to the S-adenosyl-L-methionine site. S171 carries the phosphoserine modification. S-adenosyl-L-methionine contacts are provided by V225 and H250.

The protein belongs to the diphthine synthase family.

It carries out the reaction 2-[(3S)-amino-3-carboxypropyl]-L-histidyl-[translation elongation factor 2] + 4 S-adenosyl-L-methionine = diphthine methyl ester-[translation elongation factor 2] + 4 S-adenosyl-L-homocysteine + 3 H(+). It participates in protein modification; peptidyl-diphthamide biosynthesis. Its function is as follows. S-adenosyl-L-methionine-dependent methyltransferase that catalyzes four methylations of the modified target histidine residue in translation elongation factor 2 (EF-2), to form an intermediate called diphthine methyl ester. The four successive methylation reactions represent the second step of diphthamide biosynthesis. This is Diphthine methyl ester synthase (DPH5) from Homo sapiens (Human).